The sequence spans 332 residues: D-glutamate N-acetyltransferase (332 aa).

It belongs to the N-acetyltransferase DgcN family.

It carries out the reaction D-glutamate + acetyl-CoA = N-acetyl-D-glutamate + CoA + H(+). The enzyme catalyses D-aspartate + acetyl-CoA = N-acetyl-D-aspartate + CoA + H(+). The catalysed reaction is D-glutamine + acetyl-CoA = N-acetyl-D-glutamine + CoA + H(+). It participates in amino-acid degradation. In terms of biological role, N-acetyltransferase involved in a deamination-independent D-glutamate degradation pathway, named the DgcN-DgcA pathway. Catalyzes the transfer of the acetyl moiety from acetyl-CoA to D-glutamate to generate N-acetyl-D-glutamate. Can also acetylate D-aspartate and D-glutamine, with lower efficiency. Has low activity with D-asparagine. Cannot use succinyl-CoA. This is D-glutamate N-acetyltransferase from Pseudoalteromonas sp.